The chain runs to 4882 residues: Dual E2 ubiquitin-conjugating enzyme/E3 ubiquitin-protein ligase BIRC6 (4882 aa).

WD repeat units lie at residues 71–109 (DGLH…QASA) and 110–139 (LSAK…AVGC). A BIR repeat occupies 292–362 (RRETFTSWPH…RHSPNCPFVK (71 aa)). Zn(2+) contacts are provided by C331, C334, H351, and C358. One copy of the WD 3 repeat lies at 382 to 429 (LPSADGADRIACFGSGSCPQFLAAATKRGKICIWDVSKLMKVHLKFEI). Disordered stretches follow at residues 468–502 (DIPK…SQKE), 542–561 (GANP…KHQE), and 582–622 (ATSP…SELN). Positions 475–485 (DSDDLLEDSDS) are enriched in acidic residues. Residues S476, S483, and S485 each carry the phosphoserine modification. WD repeat units follow at residues 504-723 (MEVS…VQCL), 733-854 (TLCI…QHIK), 855-931 (DPQD…AKVE), and 932-970 (PPKK…FLQI). A compositionally biased stretch (basic and acidic residues) spans 551–561 (KSEKTKEKHQE). The span at 582-591 (ATSPISSNSH) shows a compositional bias: polar residues. A phosphoserine mark is found at S584 and S593. Residues 598-622 (SRTQGESISEQGSTDNESCTNSELN) show a composition bias toward polar residues. The tract at residues 1057–1077 (QQQRRHPQHLHQQHHGDAAQH) is disordered. Positions 1060-1069 (RRHPQHLHQQ) are enriched in basic residues. T1724 is modified (phosphothreonine). Residues S2245 and S2978 each carry the phosphoserine modification. The interval 2969-2998 (VTTNTTDSVSDEEKVSGGKDVNGSSASTPG) is disordered. Residues 3212-3216 (HRRAR) form an HRRAR loop; important for DIABLO/SMAC and HTRA2 binding region. In terms of domain architecture, Ubiquitin-like spans 3842 to 4092 (DEKVTMFLQS…ESLLETCPIQ (251 aa)). Disordered stretches follow at residues 3908 to 3927 (SEQK…KVKA) and 3943 to 3973 (LKSQ…IGSA). Position 3954 is a phosphothreonine (T3954). A Phosphoserine modification is found at S4047. The tract at residues 4285–4304 (VPNSSLSQTEPQVSNSHNPT) is disordered. A compositionally biased stretch (polar residues) spans 4286-4304 (PNSSLSQTEPQVSNSHNPT). Residues 4598–4765 (ARARRLAQEA…IRQATVKWAM (168 aa)) form the UBC core domain. C4691 functions as the Glycyl thioester intermediate in the catalytic mechanism. The disordered stretch occupies residues 4857–4882 (AGAEDTLTHDHVNPSSSKDLPSDFQL). The segment covering 4869-4882 (NPSSSKDLPSDFQL) has biased composition (polar residues).

It belongs to the BIRC6 family. In terms of assembly, homodimer; antiparallel. Interacts with DIABLO/SMAC, likely with higher affinity to SMAC dimer than SMAC monomer; this interaction blocks the substrate-binding site and inhibits the caspase inhibition activity of BIRC6. Interacts with RNF41, KIF23/MKLP1, USP8/UBPY, BIRC5/survivin, MAP2K1/MEK1, RAB8A/RAB8, RAB11A/RAB11, PLK1, EXOC3/SEC6 and EXOC4/SEC8. Ubiquitinated. Ubiquitination is mediated by RNF41 E3 ligase and leads to proteasomal degradation, impairing inhibition of apoptosis. Deubiquitinated by USP8/UBPY. Autoubiquitinated; mediated by E1 ubiquitin activating enzyme UBA6. Post-translationally, proteolytically cleaved. Acts as substrate for CASP3, CASP6, CASP7, CASP9 and HTRA2. In terms of tissue distribution, widely expressed. Highly expressed in the brain and kidney.

The protein localises to the golgi apparatus. It is found in the trans-Golgi network membrane. It localises to the endosome. The protein resides in the cytoplasm. Its subcellular location is the cytoskeleton. The protein localises to the spindle pole. It is found in the microtubule organizing center. It localises to the centrosome. The protein resides in the midbody. Its subcellular location is the midbody ring. The enzyme catalyses S-ubiquitinyl-[E1 ubiquitin-activating enzyme]-L-cysteine + [acceptor protein]-L-lysine = [E1 ubiquitin-activating enzyme]-L-cysteine + N(6)-monoubiquitinyl-[acceptor protein]-L-lysine.. With respect to regulation, inhibited by DIABLO/SMAC, which competes for the substrate-binding sites on BIRC6. BIRC6 inhibits caspases and protease by ubiquitination but BIRC6 itself is subjected to protease cleavage by CASP3, CASP6, CASP7, CASP9 and HTRA2 by protease cleavage. Anti-apoptotic protein known as inhibitor of apoptosis (IAP) which can regulate cell death by controlling caspases and by acting as an E3 ubiquitin-protein ligase. Unlike most IAPs, does not contain a RING domain and it is not a RING-type E3 ligase. Instead acts as a dual E2/E3 enzyme that combines ubiquitin conjugating (E2) and ubiquitin ligase (E3) activities in a single polypeptide. Ubiquitination is mediated by a non-canonical E1 ubiquitin activating enzyme UBA6. Ubiquitinates CASP3, CASP7 and CASP9 and inhibits their caspase activity; also ubiquitinates their procaspases but to a weaker extent. Ubiquitinates pro-apoptotic factors DIABLO/SMAC and HTRA2. DIABLO/SMAC antagonizes the caspase inhibition activity of BIRC6 by competing for the same binding sites as the caspases. Ubiquitinates the autophagy protein MAP1LC3B; this activity is also inhibited by DIABLO/SMAC. Important regulator for the final stages of cytokinesis. Crucial for normal vesicle targeting to the site of abscission, but also for the integrity of the midbody and the midbody ring, and its striking ubiquitin modification. Required for normal placenta development. The sequence is that of Dual E2 ubiquitin-conjugating enzyme/E3 ubiquitin-protein ligase BIRC6 (Birc6) from Mus musculus (Mouse).